Consider the following 180-residue polypeptide: Flavodoxin B (180 aa).

Positions 4–173 constitute a Flavodoxin-like domain; it reads IGLFFGSNTG…RVAAWLAQIA (170 aa).

This sequence belongs to the flavodoxin family. Requires FMN as cofactor.

Functionally, low-potential electron donor to a number of redox enzymes. NifF is the electron donor to nitrogenase. The protein is Flavodoxin B (nifF) of Azotobacter chroococcum mcd 1.